The following is a 362-amino-acid chain: Sulfoquinovose monooxygenase (362 aa).

This sequence belongs to the SsuD family.

The catalysed reaction is 6-sulfo-D-quinovose + FMNH2 + O2 = 6-dehydro-D-glucose + FMN + sulfite + H2O + 2 H(+). In terms of biological role, part of the alkanesulfonate monooxygenase (sulfo-ASMO) pathway, a D-sulfoquinovose degradation pathway that enables the complete utilization of all carbons within sulfoquinovose (SQ) with concomitant production of inorganic sulfite. Catalyzes the oxidative desulfurization of sulfoquinovose to sulfite and 6-dehydro-D-glucose. This chain is Sulfoquinovose monooxygenase, found in Novosphingobium aromaticivorans (strain ATCC 700278 / DSM 12444 / CCUG 56034 / CIP 105152 / NBRC 16084 / F199).